A 452-amino-acid polypeptide reads, in one-letter code: Translation initiation factor eIF2B subunit gamma (452 aa).

Methionine 1 is subject to N-acetylmethionine. Serine 260 carries the post-translational modification Phosphoserine.

Belongs to the eIF-2B gamma/epsilon subunits family. Component of the translation initiation factor 2B (eIF2B) complex which is a heterodecamer of two sets of five different subunits: alpha, beta, gamma, delta and epsilon. Subunits alpha, beta and delta comprise a regulatory subcomplex and subunits epsilon and gamma comprise a catalytic subcomplex. Within the complex, the hexameric regulatory complex resides at the center, with the two heterodimeric catalytic subcomplexes bound on opposite sides.

It is found in the cytoplasm. The protein resides in the cytosol. With respect to regulation, activated by the chemical integrated stress response (ISR) inhibitor ISRIB which stimulates guanine nucleotide exchange factor activity for both phosphorylated and unphosphorylated eIF2. In terms of biological role, acts as a component of the translation initiation factor 2B (eIF2B) complex, which catalyzes the exchange of GDP for GTP on the eukaryotic initiation factor 2 (eIF2) complex gamma subunit. Its guanine nucleotide exchange factor activity is repressed when bound to eIF2 complex phosphorylated on the alpha subunit, thereby limiting the amount of methionyl-initiator methionine tRNA available to the ribosome and consequently global translation is repressed. The sequence is that of Translation initiation factor eIF2B subunit gamma (EIF2B3) from Macaca fascicularis (Crab-eating macaque).